A 185-amino-acid polypeptide reads, in one-letter code: Protein DP71L (185 aa).

Basic residues predominate over residues 1–15 (MSRRNKKRSRRRRKK). Residues 1–38 (MSRRNKKRSRRRRKKPLNDIQPGPSKSSAQDEPIKSVS) are disordered. Important for host CHOP inhibition stretches follow at residues 126–128 (VHF) and 170–174 (LSTVF).

The protein belongs to the asfivirus DP71L family. Interacts (via C-terminus) with host PPP1CB.

Functionally, interacts with the host phosphatase PP1 catalytic subunit (PPP1CB) and recruits it to dephosphorylate EIF2S1/eIF2alpha and therefore restores the host translation that has been shut-down by the host. Also inhibits the EIF2S1/eIF2alpha-ATF4-DDIT3/CHOP pathway. In African swine fever virus (isolate Pig/Kenya/KEN-50/1950) (ASFV), this protein is Protein DP71L.